Here is a 238-residue protein sequence, read N- to C-terminus: UPF0173 metal-dependent hydrolase Helmi_16730 (238 aa).

Belongs to the UPF0173 family.

The polypeptide is UPF0173 metal-dependent hydrolase Helmi_16730 (Heliobacterium modesticaldum (strain ATCC 51547 / Ice1)).